Reading from the N-terminus, the 510-residue chain is NAD(P)H-quinone oxidoreductase subunit 2, chloroplastic (510 aa).

11 consecutive transmembrane segments (helical) span residues 24-44 (LLLFHGSFIFPECILIFGLIL), 59-79 (WFYFISSTSLVMSITALLFRW), 99-119 (IFQFLILLCSTLCIPLSVEYI), 124-144 (MAITEFLLFVLTATLGGMFLC), 149-169 (LITIFVAPECFSLCSYLLSGY), 183-203 (YLLMGGASSSILVHGFSWLYG), 295-315 (WHLLLEILAILSMILGNLIAI), 323-343 (MLAYSSIGQIGYVIIGIIVGD), 347-367 (GYASMITYMLFYISMNLGTFA), 395-415 (ALSSALCLLSLGGLPPLAGFF), and 418-438 (LYLFWCGWQAGLYFLVSIGLL).

Belongs to the complex I subunit 2 family. As to quaternary structure, NDH is composed of at least 16 different subunits, 5 of which are encoded in the nucleus.

Its subcellular location is the plastid. The protein localises to the chloroplast thylakoid membrane. The enzyme catalyses a plastoquinone + NADH + (n+1) H(+)(in) = a plastoquinol + NAD(+) + n H(+)(out). It catalyses the reaction a plastoquinone + NADPH + (n+1) H(+)(in) = a plastoquinol + NADP(+) + n H(+)(out). Its function is as follows. NDH shuttles electrons from NAD(P)H:plastoquinone, via FMN and iron-sulfur (Fe-S) centers, to quinones in the photosynthetic chain and possibly in a chloroplast respiratory chain. The immediate electron acceptor for the enzyme in this species is believed to be plastoquinone. Couples the redox reaction to proton translocation, and thus conserves the redox energy in a proton gradient. The chain is NAD(P)H-quinone oxidoreductase subunit 2, chloroplastic from Asparagus officinalis (Garden asparagus).